Here is a 219-residue protein sequence, read N- to C-terminus: Protein VERNALIZATION 2 (219 aa).

A CCT domain is found at Arg-138 to Val-180.

As to expression, mainly expressed in leaves, and at low levels in the shoot apical meristem (SAM).

The protein localises to the nucleus. Functionally, involved in the regulation of vernalization; this process in essential for flowering in cv. Bd29-1 but seems do not occur in cv. Bd21. In Brachypodium distachyon (Purple false brome), this protein is Protein VERNALIZATION 2.